Here is a 214-residue protein sequence, read N- to C-terminus: Thiamine-phosphate synthase (214 aa).

4-amino-2-methyl-5-(diphosphooxymethyl)pyrimidine is bound by residues 37–41 (QYREK) and Asn73. The Mg(2+) site is built by Asp74 and Asp93. Ser112 contacts 4-amino-2-methyl-5-(diphosphooxymethyl)pyrimidine. Position 139–141 (139–141 (TIS)) interacts with 2-[(2R,5Z)-2-carboxy-4-methylthiazol-5(2H)-ylidene]ethyl phosphate. A 4-amino-2-methyl-5-(diphosphooxymethyl)pyrimidine-binding site is contributed by Lys142. Residues Gly171 and 191 to 192 (IS) each bind 2-[(2R,5Z)-2-carboxy-4-methylthiazol-5(2H)-ylidene]ethyl phosphate.

It belongs to the thiamine-phosphate synthase family. Requires Mg(2+) as cofactor.

It carries out the reaction 2-[(2R,5Z)-2-carboxy-4-methylthiazol-5(2H)-ylidene]ethyl phosphate + 4-amino-2-methyl-5-(diphosphooxymethyl)pyrimidine + 2 H(+) = thiamine phosphate + CO2 + diphosphate. It catalyses the reaction 2-(2-carboxy-4-methylthiazol-5-yl)ethyl phosphate + 4-amino-2-methyl-5-(diphosphooxymethyl)pyrimidine + 2 H(+) = thiamine phosphate + CO2 + diphosphate. The enzyme catalyses 4-methyl-5-(2-phosphooxyethyl)-thiazole + 4-amino-2-methyl-5-(diphosphooxymethyl)pyrimidine + H(+) = thiamine phosphate + diphosphate. It functions in the pathway cofactor biosynthesis; thiamine diphosphate biosynthesis; thiamine phosphate from 4-amino-2-methyl-5-diphosphomethylpyrimidine and 4-methyl-5-(2-phosphoethyl)-thiazole: step 1/1. Its function is as follows. Condenses 4-methyl-5-(beta-hydroxyethyl)thiazole monophosphate (THZ-P) and 2-methyl-4-amino-5-hydroxymethyl pyrimidine pyrophosphate (HMP-PP) to form thiamine monophosphate (TMP). The protein is Thiamine-phosphate synthase of Listeria monocytogenes serovar 1/2a (strain ATCC BAA-679 / EGD-e).